Reading from the N-terminus, the 81-residue chain is Kappa-theraphotoxin-Gr2c (81 aa).

A signal peptide spans 1-19 (MKAFFVILGLALLCAYSFA). The propeptide occupies 20-50 (LEEQDQLSLRNDLLTVMFAENSELTPETEER). Cystine bridges form between Cys-52-Cys-66, Cys-59-Cys-71, and Cys-65-Cys-75.

Belongs to the neurotoxin 30 (phrixotoxin) family. Expressed by the venom gland.

The protein localises to the secreted. In terms of biological role, inhibits sodium channels Nav1.1/SCN1A (IC(50)=5.7 uM), Nav1.2/SCN2A (IC(50)=12 uM), Nav1.4/SCN4A (IC(50)=4 uM), Nav1.6/SCN8A (IC(50)=6.6 uM), Nav1.7/SCN9A (IC(50)=13.6-1030 nM), potassium channels Kv11.1/KCNH2 (IC(50)=4.7 uM), as well as high-voltage-gated calcium channels Cav1.2/CACNA1C (IC(50)= nM). Also blocks mechanosensitive ion channels (also named stretch-activated channels or SACs) and the hypotonic cell swelling induced calcium increase associated with the activation of such channels. It can thus be useful in treating cardiac ventricular disturbances. Also induces analgesia in mammals. In Grammostola rosea (Chilean rose tarantula), this protein is Kappa-theraphotoxin-Gr2c.